The following is a 355-amino-acid chain: Elongation factor Ts (355 aa).

Residues T82 to V85 form an involved in Mg(2+) ion dislocation from EF-Tu region.

It belongs to the EF-Ts family.

It localises to the cytoplasm. Its function is as follows. Associates with the EF-Tu.GDP complex and induces the exchange of GDP to GTP. It remains bound to the aminoacyl-tRNA.EF-Tu.GTP complex up to the GTP hydrolysis stage on the ribosome. The protein is Elongation factor Ts of Helicobacter hepaticus (strain ATCC 51449 / 3B1).